We begin with the raw amino-acid sequence, 29 residues long: Cytochrome b6-f complex subunit 8 (29 aa).

A helical membrane pass occupies residues 3–23 (LITITWASVMVAFTFSLSLVV).

The protein belongs to the PetN family. The 4 large subunits of the cytochrome b6-f complex are cytochrome b6, subunit IV (17 kDa polypeptide, PetD), cytochrome f and the Rieske protein, while the 4 small subunits are PetG, PetL, PetM and PetN. The complex functions as a dimer.

It is found in the plastid. The protein localises to the chloroplast thylakoid membrane. Its function is as follows. Component of the cytochrome b6-f complex, which mediates electron transfer between photosystem II (PSII) and photosystem I (PSI), cyclic electron flow around PSI, and state transitions. In Chaetosphaeridium globosum (Charophycean green alga), this protein is Cytochrome b6-f complex subunit 8.